The following is a 333-amino-acid chain: Ornithine carbamoyltransferase (333 aa).

Residues Ser-56 to Thr-59, Arg-107, and His-134 to Gln-137 contribute to the carbamoyl phosphate site. Residues Asn-167, Asp-231, and Ser-235–Met-236 each bind L-ornithine. Residues Cys-273–Leu-274 and Arg-318 each bind carbamoyl phosphate.

It belongs to the aspartate/ornithine carbamoyltransferase superfamily. OTCase family.

It localises to the cytoplasm. The enzyme catalyses carbamoyl phosphate + L-ornithine = L-citrulline + phosphate + H(+). It participates in amino-acid degradation; L-arginine degradation via ADI pathway; carbamoyl phosphate from L-arginine: step 2/2. Functionally, reversibly catalyzes the transfer of the carbamoyl group from carbamoyl phosphate (CP) to the N(epsilon) atom of ornithine (ORN) to produce L-citrulline. This Clostridium botulinum (strain ATCC 19397 / Type A) protein is Ornithine carbamoyltransferase.